We begin with the raw amino-acid sequence, 393 residues long: Putative N(4)-(beta-N-acetylglucosaminyl)-L-asparaginase GH22932 (393 aa).

Residues alanine 15–serine 41 are disordered. A compositionally biased stretch (polar residues) spans isoleucine 19–serine 41. Intrachain disulfides connect cysteine 100–cysteine 105 and cysteine 199–cysteine 215. Residue threonine 246 is the Nucleophile of the active site. Substrate contacts are provided by residues arginine 274 to aspartate 277 and threonine 297 to glycine 300. A disulfide bond links cysteine 357 and cysteine 381.

Belongs to the Ntn-hydrolase family. Heterotetramer of two alpha and two beta chains arranged as a dimer of alpha/beta heterodimers. In terms of processing, cleaved into an alpha and beta chain by autocatalysis; this activates the enzyme. The N-terminal residue of the beta subunit is responsible for the nucleophile hydrolase activity.

The enzyme catalyses N(4)-(beta-N-acetyl-D-glucosaminyl)-L-asparagine + H2O = N-acetyl-beta-D-glucosaminylamine + L-aspartate + H(+). Functionally, cleaves the GlcNAc-Asn bond which joins oligosaccharides to the peptide of asparagine-linked glycoproteins. The polypeptide is Putative N(4)-(beta-N-acetylglucosaminyl)-L-asparaginase GH22932 (Drosophila grimshawi (Hawaiian fruit fly)).